Reading from the N-terminus, the 449-residue chain is Hyaluronidase (449 aa).

The first 23 residues, 1 to 23 (MYHIWIKFLAAWIFLKRFNGVHV), serve as a signal peptide directing secretion. Intrachain disulfides connect Cys-47/Cys-340 and Cys-211/Cys-227. N-linked (GlcNAc...) asparagine glycosylation is found at Asn-67, Asn-103, and Asn-111. The active-site Proton donor is Glu-135. The N-linked (GlcNAc...) asparagine glycan is linked to Asn-153. Asn-357 carries an N-linked (GlcNAc...) asparagine glycan. 3 disulfide bridges follow: Cys-365/Cys-376, Cys-370/Cys-427, and Cys-429/Cys-438. Asn-401 is a glycosylation site (N-linked (GlcNAc...) asparagine). In terms of domain architecture, EGF-like spans 427–438 (CQCYQGWKGLYC).

This sequence belongs to the glycosyl hydrolase 56 family. Monomer. In terms of tissue distribution, expressed by the venom gland.

The protein resides in the secreted. The catalysed reaction is Random hydrolysis of (1-&gt;4)-linkages between N-acetyl-beta-D-glucosamine and D-glucuronate residues in hyaluronate.. Its function is as follows. Snake venom endo-hyaluronidase that degrades hyaluronan to smaller oligosaccharide fragments. In venom, it is not toxic by itself, but increases the diffusion of other venom proteins by degrading the extracellular matrix. In addition, it displays antiedematogenic activity. The sequence is that of Hyaluronidase from Echis pyramidum leakeyi (Leakey's carpet viper).